The following is a 239-amino-acid chain: Probable transcriptional regulatory protein BT9727_0453 (239 aa).

It belongs to the TACO1 family. YeeN subfamily.

It localises to the cytoplasm. In Bacillus thuringiensis subsp. konkukian (strain 97-27), this protein is Probable transcriptional regulatory protein BT9727_0453.